The following is a 263-amino-acid chain: MINAGVTGASGRMGKLIIENIIKMEGIQLSSAFDLMNIGKDVGEVAQTGKLDVNISDVADMATVLKESKTNVVIDFTIAPATVANAPVVAGAGVDLIIGTTGFSDEQRATIEGAIIKNGTSAVISPNYSVGVNVFFKILQETAKYLSEYDIEIIEAHHNQKKDAPSGTAMKAAEVISETLGGKDFVYGREGLAPRDKEIGIHAVRGGDIVGDHTVLFAGDGERIEIKHQAHSRNAFASGAVKAAIWINNAGPGIHTMDDILGS.

NAD(+) is bound by residues 8–13 (GASGRM), Asp34, 99–101 (GTT), and 125–128 (SPNY). His157 acts as the Proton donor/acceptor in catalysis. (S)-2,3,4,5-tetrahydrodipicolinate is bound at residue His158. Lys161 functions as the Proton donor in the catalytic mechanism. 167–168 (GT) provides a ligand contact to (S)-2,3,4,5-tetrahydrodipicolinate.

It belongs to the DapB family.

Its subcellular location is the cytoplasm. The enzyme catalyses (S)-2,3,4,5-tetrahydrodipicolinate + NAD(+) + H2O = (2S,4S)-4-hydroxy-2,3,4,5-tetrahydrodipicolinate + NADH + H(+). The catalysed reaction is (S)-2,3,4,5-tetrahydrodipicolinate + NADP(+) + H2O = (2S,4S)-4-hydroxy-2,3,4,5-tetrahydrodipicolinate + NADPH + H(+). The protein operates within amino-acid biosynthesis; L-lysine biosynthesis via DAP pathway; (S)-tetrahydrodipicolinate from L-aspartate: step 4/4. Its function is as follows. Catalyzes the conversion of 4-hydroxy-tetrahydrodipicolinate (HTPA) to tetrahydrodipicolinate. In Methanococcoides burtonii (strain DSM 6242 / NBRC 107633 / OCM 468 / ACE-M), this protein is 4-hydroxy-tetrahydrodipicolinate reductase.